Reading from the N-terminus, the 165-residue chain is Type 3 secretion system regulator YopR (165 aa).

The interval 2–11 (TVTLNRGSIT) is 5' secretion signal. The segment at 131-149 (PYLSELINKELMILLPYNS) is 3' secretion signal.

This sequence belongs to the YopR family.

The protein resides in the secreted. Functionally, may be involved in the regulation of the assembly of the type III secretion system (T3SS), also called injectisome, which is used to inject bacterial effector proteins into eukaryotic host cells. May control the secretion and/or polymerization of YscF/SctF, the principal component of the needle filament, thereby impacting the assembly of the T3SS. Involved in pathogenesis. Essential for the establishment of Yersinia infections in a mouse model system. In Yersinia enterocolitica, this protein is Type 3 secretion system regulator YopR.